The primary structure comprises 318 residues: Putative olfactory receptor 2W6 (318 aa).

Over 1–31 the chain is Extracellular; the sequence is MGFYHVGQAAFELLTSSFILVGFSDRPHLEL. Residues 32–52 traverse the membrane as a helical segment; the sequence is IVFVVVLIFYLLTLLGNMTIV. Topologically, residues 53–63 are cytoplasmic; that stretch reads LLSALDSRLHT. Residues 64–84 traverse the membrane as a helical segment; it reads PMYFFLANLSFLDMCFTTGSI. At 85-103 the chain is on the extracellular side; that stretch reads PQMLYNLWGPDKTISYVGC. C103 and C185 are joined by a disulfide. The helical transmembrane segment at 104 to 124 threads the bilayer; the sequence is AIQLYFVLALGGVECVLLAVM. Topologically, residues 125 to 145 are cytoplasmic; that stretch reads AYDRYAAVCKPLHYTIIMHPR. The helical transmembrane segment at 146–166 threads the bilayer; that stretch reads LCGQLASVAWLSGFGNSLIMA. Topologically, residues 167 to 202 are extracellular; the sequence is PQTLMLPRCGHRRVDHFLCEMPALIGMACVDTMMLE. The helical transmembrane segment at 203–223 threads the bilayer; it reads ALAFALAIFIILAPLILILIS. Residues 224–245 lie on the Cytoplasmic side of the membrane; the sequence is YGYVGGTVLRIKSAAGRKKAFN. Residues 246–266 traverse the membrane as a helical segment; the sequence is TCSSHLIVVSLFYGTIIYMYL. Over 267–277 the chain is Extracellular; sequence QPANTYSQDQG. Residues 278 to 298 traverse the membrane as a helical segment; that stretch reads KFLTLFYTIVTPSVNPLIYTL. At 299–318 the chain is on the cytoplasmic side; that stretch reads RNKDVKEAMKKVLGKGSAEI.

This sequence belongs to the G-protein coupled receptor 1 family.

It localises to the cell membrane. Functionally, odorant receptor. In Homo sapiens (Human), this protein is Putative olfactory receptor 2W6 (OR2W6P).